We begin with the raw amino-acid sequence, 416 residues long: Adenylosuccinate synthetase (416 aa).

GTP is bound by residues 13–19 (GDEGKGK) and 41–43 (GHT). Aspartate 14 (proton acceptor) is an active-site residue. Mg(2+)-binding residues include aspartate 14 and glycine 41. Residues 14–17 (DEGK), 39–42 (NAGH), threonine 126, arginine 140, glutamine 220, threonine 235, and arginine 299 contribute to the IMP site. Catalysis depends on histidine 42, which acts as the Proton donor. Residue 295–301 (TTTGRKR) participates in substrate binding. GTP is bound by residues arginine 301, 327 to 329 (KLD), and 405 to 407 (STS).

It belongs to the adenylosuccinate synthetase family. In terms of assembly, homodimer. Mg(2+) serves as cofactor.

Its subcellular location is the cytoplasm. The catalysed reaction is IMP + L-aspartate + GTP = N(6)-(1,2-dicarboxyethyl)-AMP + GDP + phosphate + 2 H(+). It functions in the pathway purine metabolism; AMP biosynthesis via de novo pathway; AMP from IMP: step 1/2. In terms of biological role, plays an important role in the de novo pathway of purine nucleotide biosynthesis. Catalyzes the first committed step in the biosynthesis of AMP from IMP. The protein is Adenylosuccinate synthetase of Campylobacter fetus subsp. fetus (strain 82-40).